A 116-amino-acid polypeptide reads, in one-letter code: Putative UPF0320 protein YJR162C (116 aa).

This sequence belongs to the UPF0320 family.

The polypeptide is Putative UPF0320 protein YJR162C (Saccharomyces cerevisiae (strain ATCC 204508 / S288c) (Baker's yeast)).